Here is a 182-residue protein sequence, read N- to C-terminus: T-cell surface glycoprotein CD3 gamma chain (182 aa).

A signal peptide spans 1 to 22 (MEQGKGLAGLFLVISLLQGTMA). The Extracellular segment spans residues 23–116 (QQKEEKHLVK…CIELNMGTVS (94 aa)). The Ig-like domain maps to 37 to 94 (QGDGSVLLTCDFNEKTITWLKDGHRISPPNATKSTWNLGNGAKDPRGMYQCRGAKKKS). Residues C46 and C87 are joined by a disulfide bond. An N-linked (GlcNAc...) asparagine glycan is attached at N66. A helical membrane pass occupies residues 117 to 137 (GFIFAEIISIFFLAVGVYFIA). The Cytoplasmic segment spans residues 138–182 (GQDGVRQSRASDKQTLLQNEQVYQPLKDREYEQYSRLQGNQVRKK). S145 is subject to Phosphoserine. S148 bears the Phosphoserine; by PKC mark. One can recognise an ITAM domain in the interval 149 to 177 (DKQTLLQNEQVYQPLKDREYEQYSRLQGN). A Di-leucine motif motif is present at residues 153–154 (LL).

As to quaternary structure, the TCR-CD3 complex is composed of a CD3D/CD3E and a CD3G/CD3E heterodimers that preferentially associate with TCRalpha and TCRbeta, respectively, to form TCRalpha/CD3E/CD3G and TCRbeta/CD3G/CD3E trimers. In turn, the hexamer interacts with CD3Z homodimer to form the TCR-CD3 complex. Alternatively, TCRalpha and TCRbeta can be replaced by TCRgamma and TCRdelta. Phosphorylated on Tyr residues after T-cell receptor triggering by LCK in association with CD4/CD8. Phosphorylated also by PKC; leading to the TCR complex down-regulation. In terms of processing, phosphorylated on Tyr residues after T-cell receptor triggering by LCK in association with CD4/CD8.

The protein resides in the cell membrane. Functionally, part of the TCR-CD3 complex present on T-lymphocyte cell surface that plays an essential role in adaptive immune response. When antigen presenting cells (APCs) activate T-cell receptor (TCR), TCR-mediated signals are transmitted across the cell membrane by the CD3 chains CD3D, CD3E, CD3G and CD3Z. All CD3 chains contain immunoreceptor tyrosine-based activation motifs (ITAMs) in their cytoplasmic domain. Upon TCR engagement, these motifs become phosphorylated by Src family protein tyrosine kinases LCK and FYN, resulting in the activation of downstream signaling pathways. In addition to this role of signal transduction in T-cell activation, CD3G plays an essential role in the dynamic regulation of TCR expression at the cell surface. Indeed, constitutive TCR cycling is dependent on the di-leucine-based (diL) receptor-sorting motif present in CD3G. In Rattus norvegicus (Rat), this protein is T-cell surface glycoprotein CD3 gamma chain (Cd3g).